The following is a 178-amino-acid chain: Stathmin-2-A (178 aa).

Residues 38–178 form the SLD domain; the sequence is DDMEIKQLNK…RNKEQLELSG (141 aa). Residues 75 to 178 adopt a coiled-coil conformation; the sequence is KKKDVSLGEI…RNKEQLELSG (104 aa).

It belongs to the stathmin family. In terms of tissue distribution, nervous tissue.

The protein localises to the cytoplasm. Its subcellular location is the membrane. The protein resides in the cell projection. It localises to the lamellipodium. This is Stathmin-2-A (stmn2-a) from Xenopus laevis (African clawed frog).